A 352-amino-acid polypeptide reads, in one-letter code: Ion-translocating oxidoreductase complex subunit D (352 aa).

The next 4 membrane-spanning stretches (helical) occupy residues 20–40 (IMLL…WFFG), 42–62 (GTLF…AIVL), 69–91 (VASH…SIPP), and 123–143 (PAMI…TSWL). Position 187 is an FMN phosphoryl threonine (T187). The next 5 membrane-spanning stretches (helical) occupy residues 215–235 (LAGV…VFLL), 242–262 (WHIP…GWLF), 267–287 (LASP…FFIL), 301–321 (LIFG…GGYP), and 322–342 (DGVA…DYYT).

It belongs to the NqrB/RnfD family. As to quaternary structure, the complex is composed of six subunits: RsxA, RsxB, RsxC, RsxD, RsxE and RsxG. It depends on FMN as a cofactor.

It localises to the cell inner membrane. Its function is as follows. Part of a membrane-bound complex that couples electron transfer with translocation of ions across the membrane. Required to maintain the reduced state of SoxR. The protein is Ion-translocating oxidoreductase complex subunit D of Salmonella choleraesuis (strain SC-B67).